Reading from the N-terminus, the 1262-residue chain is Clustered mitochondria protein homolog (1262 aa).

Positions methionine 1–threonine 47 are disordered. Residues serine 31–aspartate 40 show a composition bias toward polar residues. The Clu domain occupies alanine 335 to leucine 580.

It belongs to the CLU family.

The protein resides in the cytoplasm. Its function is as follows. mRNA-binding protein involved in proper cytoplasmic distribution of mitochondria. In Caenorhabditis briggsae, this protein is Clustered mitochondria protein homolog.